Reading from the N-terminus, the 422-residue chain is Tryptophan synthase beta chain 1 (422 aa).

Residue Lys-107 is modified to N6-(pyridoxal phosphate)lysine.

The protein belongs to the TrpB family. In terms of assembly, tetramer of two alpha and two beta chains. Pyridoxal 5'-phosphate serves as cofactor.

The enzyme catalyses (1S,2R)-1-C-(indol-3-yl)glycerol 3-phosphate + L-serine = D-glyceraldehyde 3-phosphate + L-tryptophan + H2O. It participates in amino-acid biosynthesis; L-tryptophan biosynthesis; L-tryptophan from chorismate: step 5/5. In terms of biological role, the beta subunit is responsible for the synthesis of L-tryptophan from indole and L-serine. This is Tryptophan synthase beta chain 1 (trpB1) from Sulfurisphaera tokodaii (strain DSM 16993 / JCM 10545 / NBRC 100140 / 7) (Sulfolobus tokodaii).